The chain runs to 176 residues: DNA-directed RNA polymerase II subunit 7 (176 aa).

The protein belongs to the eukaryotic RPB7/RPC8 RNA polymerase subunit family. Component of the RNA polymerase II complex consisting of at least 12 subunits. Interacts with NRPB4.

It is found in the nucleus. Functionally, DNA-dependent RNA polymerase catalyzes the transcription of DNA into RNA using the four ribonucleoside triphosphates as substrates. Component of RNA polymerase II which synthesizes mRNA precursors and many functional non-coding RNAs. Pol II is the central component of the basal RNA polymerase II transcription machinery. It is composed of mobile elements that move relative to each other. NRPB7 is part of a subcomplex with NRPB4 that binds to a pocket formed by NRPB1, NRPB2 and NRPB6 at the base of the clamp element. The NRBP4-NRPB7 subcomplex seems to lock the clamp via NRPB7 in the closed conformation thus preventing double-stranded DNA to enter the active site cleft. The NRPB4-NRPB7 subcomplex binds single-stranded DNA and RNA. This Arabidopsis thaliana (Mouse-ear cress) protein is DNA-directed RNA polymerase II subunit 7 (NRPB7).